Here is a 510-residue protein sequence, read N- to C-terminus: Dentin matrix acidic phosphoprotein 1 (510 aa).

An N-terminal signal peptide occupies residues 1–16 (MKTTILLMFLWGLSCA). The segment at 23-510 (QNTESKSSEE…QDDNDCQDGY (488 aa)) is disordered. 2 stretches are compositionally biased toward acidic residues: residues 61 to 77 (QANEDPSDSTESEEVLG) and 101 to 119 (NKDDDEDESGDDTFGDDDG). Composition is skewed to basic and acidic residues over residues 123–180 (PEER…RPEG), 273–288 (RLPEEDGRGELDDSRT), and 299–328 (PDSKEAGLGQSREHSKSESRQESEENRSPE). Polar residues predominate over residues 333 to 343 (VQDPSSESSQE). Residue Asn-351 is glycosylated (N-linked (GlcNAc...) asparagine). A compositionally biased stretch (basic and acidic residues) spans 358–367 (EALHESRGDN). The short motif at 364-366 (RGD) is the Cell attachment site element. The N-linked (GlcNAc...) asparagine glycan is linked to Asn-370. Residues 407 to 417 (SESHESLRSSE) show a composition bias toward basic and acidic residues. Asn-427 and Asn-464 each carry an N-linked (GlcNAc...) asparagine glycan. Basic and acidic residues predominate over residues 481-499 (TEVESRKLTVDAYHNKPIG). The segment covering 500–510 (DQDDNDCQDGY) has biased composition (acidic residues).

In terms of assembly, interacts with importin alpha. In terms of processing, phosphorylated in the cytosol and extracellular matrix and unphosphorylated in the nucleus. Phosphorylation is necessary for nucleocytoplasmic transport and may be catalyzed by a nuclear isoform of CK2 and can be augmented by calcium. Phosphorylated (in vitro) by FAM20C in the extracellular medium at sites within the S-x-E/pS motif. In terms of tissue distribution, expressed in fetal brain, bone and tooth particularly in odontoblast, but not in ameloblast. Not expressed in liver and skin.

Its subcellular location is the nucleus. The protein resides in the cytoplasm. It is found in the secreted. The protein localises to the extracellular space. It localises to the extracellular matrix. Functionally, may have a dual function during osteoblast differentiation. In the nucleus of undifferentiated osteoblasts, unphosphorylated form acts as a transcriptional component for activation of osteoblast-specific genes like osteocalcin. During the osteoblast to osteocyte transition phase it is phosphorylated and exported into the extracellular matrix, where it regulates nucleation of hydroxyapatite. This chain is Dentin matrix acidic phosphoprotein 1 (DMP1), found in Bos taurus (Bovine).